Consider the following 250-residue polypeptide: NADH-quinone oxidoreductase subunit C (250 aa).

It belongs to the complex I 30 kDa subunit family. As to quaternary structure, NDH-1 is composed of 14 different subunits. Subunits NuoB, C, D, E, F, and G constitute the peripheral sector of the complex.

It localises to the cell inner membrane. The catalysed reaction is a quinone + NADH + 5 H(+)(in) = a quinol + NAD(+) + 4 H(+)(out). NDH-1 shuttles electrons from NADH, via FMN and iron-sulfur (Fe-S) centers, to quinones in the respiratory chain. The immediate electron acceptor for the enzyme in this species is believed to be ubiquinone. Couples the redox reaction to proton translocation (for every two electrons transferred, four hydrogen ions are translocated across the cytoplasmic membrane), and thus conserves the redox energy in a proton gradient. This Xylella fastidiosa (strain 9a5c) protein is NADH-quinone oxidoreductase subunit C.